Here is a 614-residue protein sequence, read N- to C-terminus: 4-hydroxy-3-methylbut-2-en-1-yl diphosphate synthase (flavodoxin) (614 aa).

[4Fe-4S] cluster contacts are provided by Cys522, Cys525, Cys556, and Glu563.

Belongs to the IspG family. Requires [4Fe-4S] cluster as cofactor.

The enzyme catalyses (2E)-4-hydroxy-3-methylbut-2-enyl diphosphate + oxidized [flavodoxin] + H2O + 2 H(+) = 2-C-methyl-D-erythritol 2,4-cyclic diphosphate + reduced [flavodoxin]. It participates in isoprenoid biosynthesis; isopentenyl diphosphate biosynthesis via DXP pathway; isopentenyl diphosphate from 1-deoxy-D-xylulose 5-phosphate: step 5/6. Converts 2C-methyl-D-erythritol 2,4-cyclodiphosphate (ME-2,4cPP) into 1-hydroxy-2-methyl-2-(E)-butenyl 4-diphosphate. The chain is 4-hydroxy-3-methylbut-2-en-1-yl diphosphate synthase (flavodoxin) from Phocaeicola vulgatus (strain ATCC 8482 / DSM 1447 / JCM 5826 / CCUG 4940 / NBRC 14291 / NCTC 11154) (Bacteroides vulgatus).